The chain runs to 77 residues: MEDFNPTTLNSPKLSRFINYSFISNNNNDKIIFYKYAISEPSYFRRITFRETPIDIDLKFPLNPFQGIFFKNPSIHH.

This is an uncharacterized protein from Dictyostelium discoideum (Social amoeba).